A 324-amino-acid chain; its full sequence is Acetyl-coenzyme A carboxylase carboxyl transferase subunit alpha (324 aa).

Residues 44-298 (RFQNQLVKLQ…KKELTEQLDS (255 aa)) enclose the CoA carboxyltransferase C-terminal domain.

This sequence belongs to the AccA family. Acetyl-CoA carboxylase is a heterohexamer composed of biotin carboxyl carrier protein (accB), biotin carboxylase (accC) and two subunits each of ACCase subunit alpha (accA) and ACCase subunit beta (accD).

The protein localises to the plastid. It is found in the chloroplast. It carries out the reaction N(6)-carboxybiotinyl-L-lysyl-[protein] + acetyl-CoA = N(6)-biotinyl-L-lysyl-[protein] + malonyl-CoA. The protein operates within lipid metabolism; malonyl-CoA biosynthesis; malonyl-CoA from acetyl-CoA: step 1/1. Functionally, component of the acetyl coenzyme A carboxylase (ACC) complex. First, biotin carboxylase catalyzes the carboxylation of biotin on its carrier protein (BCCP) and then the CO(2) group is transferred by the carboxyltransferase to acetyl-CoA to form malonyl-CoA. This is Acetyl-coenzyme A carboxylase carboxyl transferase subunit alpha from Pyropia yezoensis (Susabi-nori).